Consider the following 503-residue polypeptide: Beta-mannosyltransferase 4 (503 aa).

Residues 1–24 are Cytoplasmic-facing; it reads MKLDTQQISHLLSRQMYHLAPRKK. Residues 25–45 form a helical membrane-spanning segment; that stretch reads LLIWGGSLGFVLLLLIVASSH. Residues 46–503 are Extracellular-facing; it reads QRIRSTILHR…QYCQRYGELH (458 aa). N-linked (GlcNAc...) asparagine glycosylation occurs at Asn468.

Belongs to the BMT family.

Its subcellular location is the membrane. Beta-mannosyltransferase involved in cell wall biosynthesis. Responsible for addition of a hexose to the beta-mannose chain. This Komagataella phaffii (strain ATCC 76273 / CBS 7435 / CECT 11047 / NRRL Y-11430 / Wegner 21-1) (Yeast) protein is Beta-mannosyltransferase 4 (BMT4).